The sequence spans 230 residues: uncharacterized protein (230 aa).

2 disordered regions span residues 63 to 90 (TDCQ…KKTI) and 194 to 230 (KKLE…YKEH). The span at 194 to 217 (KKLEEREQMDKHPQDRDNKDKEVN) shows a compositional bias: basic and acidic residues.

This is an uncharacterized protein from Caenorhabditis elegans.